We begin with the raw amino-acid sequence, 297 residues long: MASSRLLDWMSRMRSVPQLERLIPALYLAHGSPFLMLPQSSDDEVFSNDSKLGGLHYQFLEQLGPFLLEKFRPKGIIVFSAHYESRGSVEVYSRDDENPLFYDYYGFPDYLYQIKFHSKGSKRIADQIISALKEYQIPAKTVSGDRGLDHGVFVPFKIMFPDGLNIPLIEVSMHTLDPMQLYKVGQALQSLRKEYLIVSGGLNIHTFEDLSAFNEDTAADGYKEFQLDILKAIETDKQNDRLNKLLGLQLHPYFRKAHPREEHFVPLYVAAGLGSSGKSKVVCDLYGAVSAFFGIDE.

Zn(2+) is bound by residues His30, His82, His205, and His263.

It belongs to the DODA-type extradiol aromatic ring-opening dioxygenase family. Zn(2+) serves as cofactor.

The protein localises to the cytoplasm. It is found in the nucleus. May be involved in the metabolism of aromatic compounds. The sequence is that of 4,5-DOPA dioxygenase extradiol-like protein from Schizosaccharomyces pombe (strain 972 / ATCC 24843) (Fission yeast).